Reading from the N-terminus, the 1145-residue chain is Cation channel sperm-associated auxiliary subunit gamma 2 (1145 aa).

The signal sequence occupies residues 1 to 38 (MVSRPAMSPVSPVWPRKPNLWAFWVLRLVLLLSLKSWA). Residues 39 to 1061 (EDALQHCTWL…IHGLPLSSKR (1023 aa)) are Extracellular-facing. Cystine bridges form between Cys-45–Cys-106 and Cys-160–Cys-166. A glycan (N-linked (GlcNAc...) asparagine) is linked at Asn-103. Residue Asn-178 is glycosylated (N-linked (GlcNAc...) asparagine). Cys-289 and Cys-344 are disulfide-bonded. Asn-356, Asn-402, Asn-672, and Asn-743 each carry an N-linked (GlcNAc...) asparagine glycan. Cystine bridges form between Cys-395–Cys-403, Cys-634–Cys-856, Cys-802–Cys-830, Cys-878–Cys-1042, Cys-905–Cys-914, and Cys-1006–Cys-1012. N-linked (GlcNAc...) asparagine glycosylation occurs at Asn-1038. The chain crosses the membrane as a helical span at residues 1062 to 1083 (TSFIVMVSTSFFIALVVFYILF). At 1084-1145 (CLVWPHIVKA…KEDNVQAKTA (62 aa)) the chain is on the cytoplasmic side.

This sequence belongs to the CATSPERG family. Component of the CatSper complex or CatSpermasome composed of the core pore-forming members CATSPER1, CATSPER2, CATSPER3 and CATSPER4 as well as auxiliary members CATSPERB, CATSPERG2, CATSPERD, CATSPERE, CATSPERZ, C2CD6/CATSPERT, SLCO6C1, TMEM249, TMEM262 and EFCAB9. HSPA1 may be an additional auxiliary complex member. The core complex members CATSPER1, CATSPER2, CATSPER3 and CATSPER4 form a heterotetrameric channel. The auxiliary CATSPERB, CATSPERG2, CATSPERD and CATSPERE subunits form a pavilion-like structure over the pore which stabilizes the complex through interactions with CATSPER4, CATSPER3, CATSPER1 and CATSPER2 respectively. SLCO6C1 interacts with CATSPERE and TMEM262/CATSPERH interacts with CATSPERB, further stabilizing the complex. C2CD6/CATSPERT interacts at least with CATSPERD and is required for targeting the CatSper complex in the flagellar membrane. Testis-specific. Specifically expressed in the principal piece of the sperm tail (at protein level). Expressed in spermatocytes and spermatids within the seminiferous tubule but not in interstitial cells.

The protein resides in the cell projection. Its subcellular location is the cilium. The protein localises to the flagellum membrane. Its function is as follows. Auxiliary component of the CatSper complex, a complex involved in sperm cell hyperactivation. Sperm cell hyperactivation is needed for sperm motility which is essential late in the preparation of sperm for fertilization. The chain is Cation channel sperm-associated auxiliary subunit gamma 2 from Mus musculus (Mouse).